The primary structure comprises 104 residues: Circadian clock oscillator protein KaiB (104 aa).

This sequence belongs to the KaiB family. As to quaternary structure, the KaiABC complex composition changes during the circadian cycle to control KaiC phosphorylation. Complexes KaiC(6), KaiA(2-4):KaiC(6), KaiB(6):KaiC(6) and KaiC(6):KaiB(6):KaiA(12) are among the most important forms, many form cooperatively. Undergoes a major conformational rearrangment; in the free state forms homotetramers as a dimer of dimers. When bound to the CI domain of KaiC switches to a monomeric thioredoxin-fold (KaiB(fs)). KaiB(fs) binds CikA, leading it to dephosphorylate phospho-RpaA.

Its function is as follows. Key component of the KaiABC oscillator complex, which constitutes the main circadian regulator in cyanobacteria. Complex composition changes during the circadian cycle to control KaiC phosphorylation. KaiA stimulates KaiC autophosphorylation, while KaiB sequesters KaiA, leading to KaiC autodephosphorylation. Phospho-Ser-431 KaiC accumulation triggers binding of KaiB to form the KaiB(6):KaiC(6) complex, leading to changes in output regulators CikA and SasA. KaiB switches to a thioredoxin-like fold (KaiB(fs)) when bound to KaiC. KaiB(6):KaiC(6) formation exposes a site for KaiA binding that sequesters KaiA from KaiC, making the KaiC(6):KaiB(6):KaiA(12) complex that results in KaiC autodephosphorylation. In terms of biological role, a metamorphic protein which reversibly switches between an inactive tetrameric fold and a rare, thioredoxin-like monomeric fold (KaiB(fs)). KaiB(fs) binds phospho-KaiC, KaiA and CikA. KaiA and CikA compete for binding to KaiB(fs), and KaiB(fs) and SasA compete for binding to KaiC, thus the clock oscillator and output signal pathway are tightly coupled. The sequence is that of Circadian clock oscillator protein KaiB from Trichodesmium erythraeum (strain IMS101).